Reading from the N-terminus, the 126-residue chain is Histone H2B type 1-H (126 aa).

The span at 1–12 shows a compositional bias: low complexity; it reads MPDPAKSAPAPK. The tract at residues 1–36 is disordered; sequence MPDPAKSAPAPKKGSKKAVTKAQKKDGKKRKRSRKE. Pro2 is subject to N-acetylproline. Lys6 is subject to N6-(2-hydroxyisobutyryl)lysine; alternate. At Lys6 the chain carries N6-(beta-hydroxybutyryl)lysine; alternate. Lys6 is subject to N6-acetyllysine; alternate. Lys6 carries the N6-butyryllysine; alternate modification. Lys6 is subject to N6-crotonyllysine; alternate. Lys6 is subject to N6-lactoyllysine; alternate. Lys6 is covalently cross-linked (Glycyl lysine isopeptide (Lys-Gly) (interchain with G-Cter in SUMO2); alternate). Ser7 carries the post-translational modification ADP-ribosylserine. N6-(beta-hydroxybutyryl)lysine; alternate is present on Lys12. Residues Lys12 and Lys13 each carry the N6-acetyllysine; alternate modification. Residues Lys12 and Lys13 each carry the N6-crotonyllysine; alternate modification. Residue Lys12 is modified to N6-lactoyllysine; alternate. The residue at position 13 (Lys13) is an N6-(2-hydroxyisobutyryl)lysine; alternate. Ser15 is subject to Phosphoserine; by STK4/MST1. 4 positions are modified to N6-acetyllysine; alternate: Lys16, Lys17, Lys21, and Lys24. 4 positions are modified to N6-crotonyllysine; alternate: Lys16, Lys17, Lys21, and Lys24. 4 positions are modified to N6-lactoyllysine; alternate: Lys16, Lys17, Lys21, and Lys24. Residues Lys17 and Lys21 each carry the N6-(beta-hydroxybutyryl)lysine; alternate modification. The residue at position 17 (Lys17) is an N6-glutaryllysine; alternate. Lys21 and Lys24 each carry N6-(2-hydroxyisobutyryl)lysine; alternate. Position 21 is an N6-butyryllysine; alternate (Lys21). Lys21 participates in a covalent cross-link: Glycyl lysine isopeptide (Lys-Gly) (interchain with G-Cter in SUMO2); alternate. Lys25 is subject to N6-(2-hydroxyisobutyryl)lysine. Lys35 is subject to N6-(2-hydroxyisobutyryl)lysine; alternate. Lys35 is modified (N6-(beta-hydroxybutyryl)lysine; alternate). The residue at position 35 (Lys35) is an N6-crotonyllysine; alternate. Lys35 is modified (N6-glutaryllysine; alternate). Lys35 carries the N6-succinyllysine; alternate modification. A Glycyl lysine isopeptide (Lys-Gly) (interchain with G-Cter in ubiquitin); alternate cross-link involves residue Lys35. The residue at position 36 (Glu36) is a PolyADP-ribosyl glutamic acid. Ser37 bears the Phosphoserine; by AMPK mark. 3 positions are modified to N6-(2-hydroxyisobutyryl)lysine; alternate: Lys44, Lys47, and Lys58. Lys44 is modified (N6-lactoyllysine; alternate). Lys44 and Lys47 each carry N6-glutaryllysine; alternate. Lys47 bears the N6-methyllysine; alternate mark. Residue Lys58 is modified to N6,N6-dimethyllysine; alternate. Arg80 carries the post-translational modification Dimethylated arginine. Lys86 is subject to N6-(2-hydroxyisobutyryl)lysine; alternate. An N6-(beta-hydroxybutyryl)lysine; alternate modification is found at Lys86. Lys86 carries the post-translational modification N6-acetyllysine; alternate. Lys86 carries the post-translational modification N6-lactoyllysine; alternate. Lys86 bears the N6,N6,N6-trimethyllysine; alternate mark. An omega-N-methylarginine mark is found at Arg87 and Arg93. Lys109 carries the N6-(2-hydroxyisobutyryl)lysine; alternate modification. Residue Lys109 is modified to N6-lactoyllysine; alternate. Position 109 is an N6-glutaryllysine; alternate (Lys109). Lys109 carries the post-translational modification N6-methyllysine; alternate. Ser113 is a glycosylation site (O-linked (GlcNAc) serine). A Phosphothreonine modification is found at Thr116. N6-(2-hydroxyisobutyryl)lysine; alternate occurs at positions 117 and 121. An N6-(beta-hydroxybutyryl)lysine; alternate mark is found at Lys117 and Lys121. Residues Lys117 and Lys121 each carry the N6-lactoyllysine; alternate modification. Lys117 and Lys121 each carry N6-glutaryllysine; alternate. N6-succinyllysine; alternate occurs at positions 117 and 121. Lys117 carries the N6-malonyllysine; alternate modification. Residue Lys117 is modified to N6-methylated lysine; alternate. Residue Lys121 forms a Glycyl lysine isopeptide (Lys-Gly) (interchain with G-Cter in ubiquitin); alternate linkage.

Belongs to the histone H2B family. As to quaternary structure, the nucleosome is a histone octamer containing two molecules each of H2A, H2B, H3 and H4 assembled in one H3-H4 heterotetramer and two H2A-H2B heterodimers. The octamer wraps approximately 147 bp of DNA. Found in a complex with PPAR9; DTX3L AND STAT1; the interaction is likely to induce DTX3L-mediated ubiquitination of H2BC9/H2BJ. In terms of processing, monoubiquitination at Lys-35 (H2BK34Ub) by the MSL1/MSL2 dimer is required for histone H3 'Lys-4' (H3K4me) and 'Lys-79' (H3K79me) methylation and transcription activation at specific gene loci, such as HOXA9 and MEIS1 loci. Similarly, monoubiquitination at Lys-121 (H2BK120Ub) by the RNF20/40 complex gives a specific tag for epigenetic transcriptional activation and is also prerequisite for histone H3 'Lys-4' and 'Lys-79' methylation. It also functions cooperatively with the FACT dimer to stimulate elongation by RNA polymerase II. H2BK120Ub also acts as a regulator of mRNA splicing: deubiquitination by USP49 is required for efficient cotranscriptional splicing of a large set of exons. Monoubiquitinated by DTX3L upon encephalomyocarditis virus (EMCV)-mediated infection. Phosphorylation at Ser-37 (H2BS36ph) by AMPK in response to stress promotes transcription. Phosphorylated on Ser-15 (H2BS14ph) by STK4/MST1 during apoptosis; which facilitates apoptotic chromatin condensation. Also phosphorylated on Ser-15 in response to DNA double strand breaks (DSBs), and in correlation with somatic hypermutation and immunoglobulin class-switch recombination. Post-translationally, glcNAcylation at Ser-113 promotes monoubiquitination of Lys-121. It fluctuates in response to extracellular glucose, and associates with transcribed genes. In terms of processing, ADP-ribosylated by PARP1 or PARP2 on Ser-7 (H2BS6ADPr) in response to DNA damage. H2BS6ADPr promotes recruitment of CHD1L. Poly ADP-ribosylation on Glu-36 (H2BE35ADPr) by PARP1 regulates adipogenesis: it inhibits phosphorylation at Ser-37 (H2BS36ph), thereby blocking expression of pro-adipogenetic genes. Crotonylation (Kcr) is specifically present in male germ cells and marks testis-specific genes in post-meiotic cells, including X-linked genes that escape sex chromosome inactivation in haploid cells. Crotonylation marks active promoters and enhancers and confers resistance to transcriptional repressors. It is also associated with post-meiotically activated genes on autosomes. Post-translationally, lactylated in macrophages by EP300/P300 by using lactoyl-CoA directly derived from endogenous or exogenous lactate, leading to stimulates gene transcription.

Its subcellular location is the nucleus. It is found in the chromosome. Its function is as follows. Core component of nucleosome. Nucleosomes wrap and compact DNA into chromatin, limiting DNA accessibility to the cellular machineries which require DNA as a template. Histones thereby play a central role in transcription regulation, DNA repair, DNA replication and chromosomal stability. DNA accessibility is regulated via a complex set of post-translational modifications of histones, also called histone code, and nucleosome remodeling. This Homo sapiens (Human) protein is Histone H2B type 1-H.